Reading from the N-terminus, the 562-residue chain is Formate--tetrahydrofolate ligase (562 aa).

71–78 (TPAGEGKS) is an ATP binding site.

Belongs to the formate--tetrahydrofolate ligase family.

The catalysed reaction is (6S)-5,6,7,8-tetrahydrofolate + formate + ATP = (6R)-10-formyltetrahydrofolate + ADP + phosphate. The protein operates within one-carbon metabolism; tetrahydrofolate interconversion. In Bacillus cereus (strain Q1), this protein is Formate--tetrahydrofolate ligase.